The primary structure comprises 1162 residues: Nucleoporin nup132 (1162 aa).

It belongs to the nucleoporin Nup133 family. As to quaternary structure, component of the npc107-120 complex which consists of nup85, nup107, nup120, nup131, nup132 and seh1. Interacts with nup107.

The protein resides in the nucleus envelope. Functionally, functions as a component of the nuclear pore complex (NPC). NPC components, collectively referred to as nucleoporins (NUPs), can play the role of both NPC structural components and of docking or interaction partners for transiently associated nuclear transport factors. Active directional transport is assured by both, a Phe-Gly (FG) repeat affinity gradient for these transport factors across the NPC and a transport cofactor concentration gradient across the nuclear envelope. In Schizosaccharomyces pombe (strain 972 / ATCC 24843) (Fission yeast), this protein is Nucleoporin nup132 (nup132).